Here is a 399-residue protein sequence, read N- to C-terminus: Succinate--CoA ligase [ADP-forming] subunit beta (399 aa).

An ATP-grasp domain is found at 9 to 254; that stretch reads KAVLAEFGVA…ESEEDPKEIE (246 aa). ATP-binding positions include K46, 53–55, E109, A112, and E117; that span reads GRG. The Mg(2+) site is built by N209 and D223. Residues N274 and 331–333 contribute to the substrate site; that span reads GIM.

The protein belongs to the succinate/malate CoA ligase beta subunit family. As to quaternary structure, heterotetramer of two alpha and two beta subunits. Mg(2+) serves as cofactor.

The enzyme catalyses succinate + ATP + CoA = succinyl-CoA + ADP + phosphate. It carries out the reaction GTP + succinate + CoA = succinyl-CoA + GDP + phosphate. It functions in the pathway carbohydrate metabolism; tricarboxylic acid cycle; succinate from succinyl-CoA (ligase route): step 1/1. Functionally, succinyl-CoA synthetase functions in the citric acid cycle (TCA), coupling the hydrolysis of succinyl-CoA to the synthesis of either ATP or GTP and thus represents the only step of substrate-level phosphorylation in the TCA. The beta subunit provides nucleotide specificity of the enzyme and binds the substrate succinate, while the binding sites for coenzyme A and phosphate are found in the alpha subunit. In Phenylobacterium zucineum (strain HLK1), this protein is Succinate--CoA ligase [ADP-forming] subunit beta.